Consider the following 639-residue polypeptide: tRNA (uracil(54)-C(5))-methyltransferase (639 aa).

Positions 78 to 113 (VPPTMKHTVDNKRLSSPLTDSGNRRTKKPKLRKYKA) are disordered. Residues Ser92 and Ser93 each carry the phosphoserine modification. The segment covering 101–113 (RRTKKPKLRKYKA) has biased composition (basic residues). A TRAM domain is found at 163–228 (LQYHREVKNV…PYYVESDLLD (66 aa)). Residues Gln461, Tyr496, Glu517, and Asp564 each coordinate S-adenosyl-L-methionine. Catalysis depends on Cys591, which acts as the Nucleophile. Glu631 acts as the Proton acceptor in catalysis.

This sequence belongs to the class I-like SAM-binding methyltransferase superfamily. RNA M5U methyltransferase family.

It carries out the reaction uridine(54) in tRNA + S-adenosyl-L-methionine = 5-methyluridine(54) in tRNA + S-adenosyl-L-homocysteine + H(+). Functionally, catalyzes the formation of 5-methyl-uridine at position 54 (m5U54) in all tRNA. May also have a role in tRNA stabilization or maturation. This chain is tRNA (uracil(54)-C(5))-methyltransferase (TRM2), found in Saccharomyces cerevisiae (strain ATCC 204508 / S288c) (Baker's yeast).